A 285-amino-acid chain; its full sequence is Diaminopimelate epimerase (285 aa).

Substrate is bound by residues N15 and N68. The active-site Proton donor is C77. Substrate contacts are provided by residues 78-79 (GN), N165, N201, and 219-220 (ER). C228 acts as the Proton acceptor in catalysis. 229 to 230 (GT) lines the substrate pocket.

The protein belongs to the diaminopimelate epimerase family. As to quaternary structure, homodimer.

The protein localises to the cytoplasm. The catalysed reaction is (2S,6S)-2,6-diaminopimelate = meso-2,6-diaminopimelate. It participates in amino-acid biosynthesis; L-lysine biosynthesis via DAP pathway; DL-2,6-diaminopimelate from LL-2,6-diaminopimelate: step 1/1. Its function is as follows. Catalyzes the stereoinversion of LL-2,6-diaminopimelate (L,L-DAP) to meso-diaminopimelate (meso-DAP), a precursor of L-lysine and an essential component of the bacterial peptidoglycan. The chain is Diaminopimelate epimerase from Synechococcus sp. (strain JA-2-3B'a(2-13)) (Cyanobacteria bacterium Yellowstone B-Prime).